Consider the following 473-residue polypeptide: Photosystem II CP43 reaction center protein (473 aa).

Positions 1–14 (MKILYSLRRFYHVE) are excised as a propeptide. Thr15 is modified (N-acetylthreonine). A Phosphothreonine modification is found at Thr15. 5 consecutive transmembrane segments (helical) span residues 69–93 (LFEVAHFVPEKPMYEQGLILLPHLA), 134–155 (LLGPETLEESFPFFGYVWQDRN), 178–200 (KALYFGGVYDTWAPGGGDVRKIT), 255–275 (KPFAWARRAFVWSGEAYLSYS), and 291–312 (WFNNTAYPSEFYGPTGPEASQA). Glu367 lines the [CaMn4O5] cluster pocket. Residues 447–471 (RARAAAAGFEKGIDRDLEPVVYMTP) form a helical membrane-spanning segment.

Belongs to the PsbB/PsbC family. PsbC subfamily. In terms of assembly, PSII is composed of 1 copy each of membrane proteins PsbA, PsbB, PsbC, PsbD, PsbE, PsbF, PsbH, PsbI, PsbJ, PsbK, PsbL, PsbM, PsbT, PsbX, PsbY, PsbZ, Psb30/Ycf12, at least 3 peripheral proteins of the oxygen-evolving complex and a large number of cofactors. It forms dimeric complexes. Requires Binds multiple chlorophylls and provides some of the ligands for the Ca-4Mn-5O cluster of the oxygen-evolving complex. It may also provide a ligand for a Cl- that is required for oxygen evolution. PSII binds additional chlorophylls, carotenoids and specific lipids. as cofactor. Phosphorylated in both bundle sheath and mesophyll cells, phosphorylation increases when cells are grown under high rather than low light regimes (70 vs 900 umol photons/m-2/s).

The protein resides in the plastid. The protein localises to the chloroplast thylakoid membrane. Its function is as follows. One of the components of the core complex of photosystem II (PSII). It binds chlorophyll and helps catalyze the primary light-induced photochemical processes of PSII. PSII is a light-driven water:plastoquinone oxidoreductase, using light energy to abstract electrons from H(2)O, generating O(2) and a proton gradient subsequently used for ATP formation. The protein is Photosystem II CP43 reaction center protein of Zea mays (Maize).